We begin with the raw amino-acid sequence, 541 residues long: MVSPGPVFGIVLLIIARVSRSAGIGFRFASYIDNYMVLQKEPSGAVIWGFGTPGATVTVTLCQGQETIMKKVTSVKEPSNTWMVVLDPMKPGGPFEVMAQQTLGTMNFTLRVHDVLFGDVWLCSGQSNMQMTVSQIFNASKELSDTAAYQSVRIFSVSLIQSEEELDDLTEVDLSWSKPTAGNLGHGNFTYMSAVCWLFGRYLYDTLQYPIGLVSSSWGGTYIEVWSSRRTLKACGVPNTRDERVGQPEIKPMRNECNSEESSCPFRVVPSVRVTGPTRHSVLWNAMIHPLQNMTLKGVVWYQGESNADYNRDLYTCMFPELIEDWRQTFHYGSQGQTDRFFPFGFVQLSSYMLKNSSDYGFPEIRWHQTADFGHVPNPKMPNTFMAVAIDLCDRDSPFGSIHPRDKQTVAYRLHLGARAVAYGEKNLTFQGPLPKKIELLASNGLLNLTYDQEIQVQMQDNKTFEISCCSDRHCKWLPAPVNTFSTQTLILDLNACLGTVVAVRYAWTTWPCEYKQCAVYHTSSMLPAPPFIAQISHRGI.

Residues 1-23 form the signal peptide; sequence MVSPGPVFGIVLLIIARVSRSAG. Residues Asn-107, Asn-138, Asn-188, Asn-293, Asn-356, Asn-427, Asn-448, and Asn-462 are each glycosylated (N-linked (GlcNAc...) asparagine).

In terms of assembly, disulfide-linked heterodimer of a small subunit and a large subunit. Post-translationally, the two subunits are derived from a single precursor by proteolytic cleavage. In terms of processing, the lysosomal isoform is glycosylated. As to expression, highly expressed in liver, testis, and kidney, whereas skeletal muscle, adipose tissue, and heart have lower levels. Highest expression in brain and ovary and lower levels in liver and thymus.

Its subcellular location is the lysosome. It is found in the cytoplasm. The catalysed reaction is N-acetyl-9-O-acetylneuraminate + H2O = N-acetylneuraminate + acetate + H(+). It catalyses the reaction an Ac-O-9-sialoglycoconjugate + H2O = a sialoglycoconjugate + acetate + H(+). With respect to regulation, inhibited by diisopropyl fluorophosphate and diethyl-P-nitrophenyl phosphate. Its function is as follows. Catalyzes the removal of O-acetyl ester groups from position 9 of the free diacetylated sialate N-acetyl-9-O-acetylneuraminate (Neu5,9Ac2) in the cytosol and of the diacetylated sialate residues of sialylglycoconjugates in the lysosomes. Together with the sialate-O-acetyltransferase they regulate the balance of acetylated sialoglycoconjugates, key players in various processes such as cell-cell interactions, host-pathogen recognition, and tumor antigenicity. This chain is Sialate O-acetylesterase (Siae), found in Mus musculus (Mouse).